Reading from the N-terminus, the 199-residue chain is Thymidylate kinase (199 aa).

Gly-7 to Ser-14 is a binding site for ATP.

It belongs to the thymidylate kinase family.

It carries out the reaction dTMP + ATP = dTDP + ADP. Phosphorylation of dTMP to form dTDP in both de novo and salvage pathways of dTTP synthesis. The chain is Thymidylate kinase from Thermosipho melanesiensis (strain DSM 12029 / CIP 104789 / BI429).